Here is a 122-residue protein sequence, read N- to C-terminus: Large ribosomal subunit protein uL14 (122 aa).

Belongs to the universal ribosomal protein uL14 family. As to quaternary structure, part of the 50S ribosomal subunit. Forms a cluster with proteins L3 and L19. In the 70S ribosome, L14 and L19 interact and together make contacts with the 16S rRNA in bridges B5 and B8.

In terms of biological role, binds to 23S rRNA. Forms part of two intersubunit bridges in the 70S ribosome. In Verminephrobacter eiseniae (strain EF01-2), this protein is Large ribosomal subunit protein uL14.